A 249-amino-acid polypeptide reads, in one-letter code: MGIIQTKDLNLYYGNVQALKKINLDFSANTVTALIGPSGCGKSTFLRTINRMNDLISTVKIDGEVMFEGKDVYKDYDEIELRKRVGMVFQKPNPFPMSIYDNVAYGPRIHGIKNKGKLDEIVERSLKGSALWEEVKDRLKKSALGLSGGQQQRLCIARTLAVEPEVLLMDEPTSALDPISTLKIEELMDELKHKYTVIIVTHNMQQAGRISDNTAFFLNGEVVENGKTEDIFYKPKDKRTEDYITGRFG.

One can recognise an ABC transporter domain in the interval 4-244 (IQTKDLNLYY…PKDKRTEDYI (241 aa)). 36–43 (GPSGCGKS) is a binding site for ATP.

It belongs to the ABC transporter superfamily. Phosphate importer (TC 3.A.1.7) family. In terms of assembly, the complex is composed of two ATP-binding proteins (PstB), two transmembrane proteins (PstC and PstA) and a solute-binding protein (PstS).

The protein localises to the cell membrane. It catalyses the reaction phosphate(out) + ATP + H2O = ADP + 2 phosphate(in) + H(+). In terms of biological role, part of the ABC transporter complex PstSACB involved in phosphate import. Responsible for energy coupling to the transport system. The polypeptide is Phosphate import ATP-binding protein PstB (Clostridium acetobutylicum (strain ATCC 824 / DSM 792 / JCM 1419 / IAM 19013 / LMG 5710 / NBRC 13948 / NRRL B-527 / VKM B-1787 / 2291 / W)).